Reading from the N-terminus, the 508-residue chain is CXXC-type zinc finger protein 1 (508 aa).

The CXXC-type zinc finger occupies 10–47 (EDVWKERCMNCIRCNDEKNCGTCWPCRNGKTCDMRKCF). Disordered regions lie at residues 95-156 (QQVE…EPDK) and 453-508 (KSQS…TQNN). Composition is skewed to low complexity over residues 113–123 (AAAAAQQRKAN) and 454–481 (SQSTSSSASAHGATTPISSTSSSSSSSS).

Component of the SET2 complex (also known as the SET1/COMPASS complex), which contains at least set-2, swd-2.1, cfp-1, rbbp-5, wdr-5.1, dpy-30 and ash-2. Within the complex, interacts with wdr-5.1, ash-2 and dpy-30. Also interacts with the SIN3S complex, which contains at least sin-3, hda-1, athp-1 and mrg-1. Interacts with sin-3, hda-1 and mrg-1.

The protein localises to the nucleus. Transcriptional activator that exhibits a unique DNA binding specificity for CpG motifs; enriched at promoters containing the trimethylation mark on histone H3 'Lys-4' (H3K4me3). Forms part of the SET2 complex and interacts with the SIN3S HDAC complex at promoters. Required for H3K4 trimethylation and plays a repressive role in the expression of heat shock and salt-inducible genes. Required for fertility, in cooperation with class I histone deacetylases (HDACs). This is CXXC-type zinc finger protein 1 from Caenorhabditis elegans.